A 605-amino-acid polypeptide reads, in one-letter code: YTH domain-containing protein ECT4 (605 aa).

Disordered stretches follow at residues 249 to 274 (GVASSYSKANNNVPATRNQNSSSNSH) and 357 to 384 (ELNRGPRAKGTKATEEVSSEEVKKQTFD). The segment covering 256 to 274 (KANNNVPATRNQNSSSNSH) has biased composition (polar residues). A compositionally biased stretch (basic and acidic residues) spans 368–383 (KATEEVSSEEVKKQTF). The YTH domain maps to 414–551 (AKFFIIKSYS…EQGLKVVKIF (138 aa)). Residues 420–422 (KSY), Asp426, 436–437 (WA), Asn469, Trp493, Trp498, and Trp506 contribute to the RNA site. A disordered region spans residues 580–605 (KQQQSQKQVWEGKTNDEKPGTVDSTM).

In terms of tissue distribution, expressed in the shoot apex, at the sites of leaf formation, and in emerging leaves.

Its subcellular location is the cytoplasm. Functionally, specifically recognizes and binds N6-methyladenosine (m6A)-containing RNAs, and regulates mRNA stability. M6A is a modification present at internal sites of mRNAs and some non-coding RNAs and plays a role in mRNA stability and processing. Required for the correct timing of leaf formation and normal leaf morphology. The protein is YTH domain-containing protein ECT4 of Arabidopsis thaliana (Mouse-ear cress).